Consider the following 39-residue polypeptide: Non-specific lipid-transfer protein (39 aa).

The protein belongs to the plant LTP family.

Plant non-specific lipid-transfer proteins transfer phospholipids as well as galactolipids across membranes. May play a role in wax or cutin deposition in the cell walls of expanding epidermal cells and certain secretory tissues. This chain is Non-specific lipid-transfer protein, found in Musa acuminata (Banana).